A 70-amino-acid polypeptide reads, in one-letter code: Large ribosomal subunit protein eL38 (70 aa).

A Glycyl lysine isopeptide (Lys-Gly) (interchain with G-Cter in SUMO2) cross-link involves residue Lys4. Lys9 bears the N6-acetyllysine; alternate mark. Lys9 is covalently cross-linked (Glycyl lysine isopeptide (Lys-Gly) (interchain with G-Cter in SUMO2); alternate). N6-acetyllysine is present on Lys67.

This sequence belongs to the eukaryotic ribosomal protein eL38 family. As to quaternary structure, component of the large ribosomal subunit.

It localises to the cytoplasm. Component of the large ribosomal subunit. The ribosome is a large ribonucleoprotein complex responsible for the synthesis of proteins in the cell. The polypeptide is Large ribosomal subunit protein eL38 (RPL38) (Homo sapiens (Human)).